A 456-amino-acid polypeptide reads, in one-letter code: MFS-type transporter SLC18B1 (456 aa).

Methionine 1 is subject to N-acetylmethionine. Residues methionine 1 to glutamate 24 are disordered. Residues methionine 1 to glutamine 33 lie on the Cytoplasmic side of the membrane. The segment covering proline 10–glycine 23 has biased composition (low complexity). A Phosphoserine modification is found at serine 21. A helical membrane pass occupies residues valine 34–leucine 54. At glycine 55–threonine 70 the chain is on the extracellular side. The helical transmembrane segment at isoleucine 71–glycine 91 threads the bilayer. Residues asparagine 92–lysine 100 lie on the Cytoplasmic side of the membrane. A helical membrane pass occupies residues phenylalanine 101–aspartate 121. The Extracellular portion of the chain corresponds to arginine 122–proline 127. A helical transmembrane segment spans residues valine 128–methionine 148. The Cytoplasmic portion of the chain corresponds to threonine 149–asparagine 161. The helical transmembrane segment at asparagine 162–valine 184 threads the bilayer. Over glycine 185 to glutamate 195 the chain is Extracellular. A helical transmembrane segment spans residues valine 196–leucine 216. At proline 217–lysine 230 the chain is on the cytoplasmic side. The helical transmembrane segment at leucine 231–phenylalanine 251 threads the bilayer. Residues glycine 252–tyrosine 272 are Extracellular-facing. A helical membrane pass occupies residues valine 273 to leucine 293. At leucine 294 to tryptophan 304 the chain is on the cytoplasmic side. Residues leucine 305–isoleucine 325 form a helical membrane-spanning segment. Residues leucine 326–glutamine 331 are Extracellular-facing. The chain crosses the membrane as a helical span at residues leucine 332–proline 352. Residues threonine 353–serine 377 lie on the Cytoplasmic side of the membrane. A helical membrane pass occupies residues glycine 378–leucine 398. Over tyrosine 399–alanine 407 the chain is Extracellular. The chain crosses the membrane as a helical span at residues alanine 408–leucine 428. The Cytoplasmic portion of the chain corresponds to glutamate 429 to threonine 456. Serine 438 carries the phosphoserine modification.

The protein belongs to the major facilitator superfamily. As to expression, expressed in various tissues including lung, placenta, adrenal gland, liver, testis, and brain.

Its subcellular location is the cytoplasmic vesicle. The protein resides in the secretory vesicle membrane. The protein localises to the secretory vesicle. It localises to the synaptic vesicle membrane. It catalyses the reaction spermine(in) + n H(+)(out) = spermine(out) + n H(+)(in). The catalysed reaction is spermidine(in) + n H(+)(out) = spermidine(out) + n H(+)(in). It carries out the reaction serotonin(in) + n H(+)(out) = serotonin(out) + n H(+)(in). Functionally, proton-coupled polyamine antiporter involved in the translocation of polyamines from cytosol into secretory vesicles prior to their release via exocytosis. Uses the electrochemical proton gradient generated by a V-type proton-pumping ATPase to couple the efflux of protons with the uptake of a polyamine molecule. Facilitates vesicular storage of spermine and spermidine in astrocytes with an impact on glutamatergic neuronal transmission and memory formation. Upon antigen stimulation, regulates polyamine accumulation and release in mast cell secretory granules, which in turn potentiates mast cell degranulation and histamine secretion. The chain is MFS-type transporter SLC18B1 from Homo sapiens (Human).